A 358-amino-acid polypeptide reads, in one-letter code: Protein RecA (358 aa).

An ATP-binding site is contributed by 78 to 85 (GPESGGKT).

The protein belongs to the RecA family.

The protein resides in the cytoplasm. In terms of biological role, can catalyze the hydrolysis of ATP in the presence of single-stranded DNA, the ATP-dependent uptake of single-stranded DNA by duplex DNA, and the ATP-dependent hybridization of homologous single-stranded DNAs. It interacts with LexA causing its activation and leading to its autocatalytic cleavage. The polypeptide is Protein RecA (Deinococcus geothermalis (strain DSM 11300 / CIP 105573 / AG-3a)).